Reading from the N-terminus, the 584-residue chain is MVSLSIPSMLRQCVNLHPDGTAFTYIDYERDSEGISESLTWSQVYRRTLNVAAEVRRHAAIGDRAVILAPQGLDYIVAFLGALQAGLIAVPLSAPLGGASDERVDAVVRDAKPNVVLTTSAIMGDVVPRVTPPPGIASPPTVAVDQLDLDSPIRSNIVDDSLQTTAYLQYTSGSTRTPAGVMITYKNILANFQQMISAYFADTGAVPPLDLFIMSWLPFYHDMGLVLGVCAPIIVGCGAVLTSPVAFLQRPARWLQLMAREGQAFSAAPNFAFELTAAKAIDDDLAGLDLGRIKTILCGSERVHPATLKRFVDRFSRFNLREFAIRPAYGLAEATVYVATSQAGQPPEIRYFEPHELSAGQAKPCATGAGTALVSYPLPQSPIVRIVDPNTNTECPPGTIGEIWVHGDNVAGGYWEKPDETERTFGGALVAPSAGTPVGPWLRTGDSGFVSEDKFFIIGRIKDLLIVYGRNHSPDDIEATIQEITRGRCAAIAVPSNGVEKLVAIVELNNRGNLDTERLSFVTREVTSAISTSHGLSVSDLVLVAPGSIPITTSGKVRRAECVKLYRHNEFTRLDAKPLQASDL.

2 helical membrane passes run 199–219 (YFAD…WLPF) and 225–245 (LVLG…TSPV).

Belongs to the ATP-dependent AMP-binding enzyme family.

It localises to the membrane. The catalysed reaction is holo-[(hydroxy)phthioceranic acid synthase] + hexadecanoate + ATP = hexadecanoyl-[(hydroxy)phthioceranic acid synthase] + AMP + diphosphate. It catalyses the reaction holo-[(hydroxy)phthioceranic acid synthase] + octadecanoate + ATP = octadecanoyl-[(hydroxy)phthioceranic acid synthase] + AMP + diphosphate. It participates in lipid metabolism; fatty acid biosynthesis. Catalyzes the activation of long-chain fatty acids as acyl-adenylates (acyl-AMP), which are then transferred to the multifunctional polyketide synthase (PKS) type III for further chain extension. Involved in the biosynthesis of sulfolipid 1 (SL-1). In Mycobacterium bovis (strain ATCC BAA-935 / AF2122/97), this protein is Long-chain-fatty-acid--AMP ligase FadD23 (fadD23).